A 90-amino-acid chain; its full sequence is Beta-microseminoprotein (90 aa).

5 disulfides stabilise this stretch: cysteine 2/cysteine 16, cysteine 34/cysteine 70, cysteine 37/cysteine 46, cysteine 39/cysteine 47, and cysteine 61/cysteine 84. Valine 90 bears the Valine amide mark.

The protein belongs to the beta-microseminoprotein family.

It localises to the secreted. This chain is Beta-microseminoprotein (MSMB), found in Struthio camelus (Common ostrich).